We begin with the raw amino-acid sequence, 367 residues long: Uroporphyrinogen decarboxylase (367 aa).

Methionine 1 bears the N-acetylmethionine mark. Residues arginine 37, alanine 39, arginine 41, arginine 50, aspartate 86, tyrosine 164, serine 219, and histidine 339 each contribute to the coproporphyrinogen I site. 3 residues coordinate coproporphyrinogen III: arginine 37, alanine 39, and arginine 41. 4 residues coordinate coproporphyrinogen III: aspartate 86, tyrosine 164, serine 219, and histidine 339.

Belongs to the uroporphyrinogen decarboxylase family. As to quaternary structure, homodimer.

The protein resides in the cytoplasm. It is found in the cytosol. It carries out the reaction uroporphyrinogen III + 4 H(+) = coproporphyrinogen III + 4 CO2. It catalyses the reaction uroporphyrinogen I + 4 H(+) = coproporphyrinogen I + 4 CO2. The protein operates within porphyrin-containing compound metabolism; protoporphyrin-IX biosynthesis; coproporphyrinogen-III from 5-aminolevulinate: step 4/4. Functionally, catalyzes the sequential decarboxylation of the four acetate side chains of uroporphyrinogen to form coproporphyrinogen and participates in the fifth step in the heme biosynthetic pathway. Isomer I or isomer III of uroporphyrinogen may serve as substrate, but only coproporphyrinogen III can ultimately be converted to heme. In vitro also decarboxylates pentacarboxylate porphyrinogen I. This chain is Uroporphyrinogen decarboxylase, found in Pongo abelii (Sumatran orangutan).